The primary structure comprises 390 residues: S-adenosylmethionine synthase (390 aa).

Mg(2+) is bound at residue Glu-12. His-18 provides a ligand contact to ATP. A K(+)-binding site is contributed by Glu-46. L-methionine contacts are provided by Glu-59 and Gln-102. Residues 170-172 (DGK), 238-241 (SGRF), Asp-249, 255-256 (RK), Ala-272, Lys-276, and Lys-280 each bind ATP. Asp-249 serves as a coordination point for L-methionine. L-methionine is bound at residue Lys-280.

The protein belongs to the AdoMet synthase family. Homotetramer. It depends on Mn(2+) as a cofactor. Requires Mg(2+) as cofactor. Co(2+) is required as a cofactor. The cofactor is K(+).

It localises to the cytoplasm. It catalyses the reaction L-methionine + ATP + H2O = S-adenosyl-L-methionine + phosphate + diphosphate. It functions in the pathway amino-acid biosynthesis; S-adenosyl-L-methionine biosynthesis; S-adenosyl-L-methionine from L-methionine: step 1/1. Functionally, catalyzes the formation of S-adenosylmethionine from methionine and ATP. The reaction comprises two steps that are both catalyzed by the same enzyme: formation of S-adenosylmethionine (AdoMet) and triphosphate, and subsequent hydrolysis of the triphosphate. In Chlamydomonas reinhardtii (Chlamydomonas smithii), this protein is S-adenosylmethionine synthase (METM).